The sequence spans 49 residues: Large ribosomal subunit protein bL33 (49 aa).

This sequence belongs to the bacterial ribosomal protein bL33 family.

The polypeptide is Large ribosomal subunit protein bL33 (Clostridium beijerinckii (strain ATCC 51743 / NCIMB 8052) (Clostridium acetobutylicum)).